We begin with the raw amino-acid sequence, 509 residues long: MTGEKIRSLHRDQKPSKDEDLLEPDEEATAGGTFTRTGKLKNSKMFSNHKVIRSPSNPALLQNHHQQISPITPGESKTDAYFPVHECVFKGDIRRLSSLIRSHSIGQKDNHGNTPLHLAVMLGNKECAHLLLAHNAPVKVKNAQGWSPLAEAISYGDRQMITALLRKLKQQSRESVEEKRPRLLKALKELGDFYLELHWDFQSWVPLLSRILPSDACKIYKQGINIRLDTTLIDFTDMKCQRGDLSFIFNGDAAPSESFVVLDNEQKVYQRIHHEESEMETEEEVDILMSSDIYSATLSTKSISFTRAQTGWLFREDKTERVGNFLADFHLVNGLILESRKRREHLTEEDILRNKAIMESLSKGGNLMEQNFEPVRRQSLTPPPPNTITWEEYISAENGKAPHLGRELVCKENKKTFKATIAMSQDFPLGIESLLNVLEVIAPFKHFNKLREFVQMKLPPGFPVKLDIPVFPTITATVTFQEFRYGEFEDAIFTIPDDYKEDPSRFPDL.

Residues 1 to 19 (MTGEKIRSLHRDQKPSKDE) are compositionally biased toward basic and acidic residues. The interval 1–42 (MTGEKIRSLHRDQKPSKDEDLLEPDEEATAGGTFTRTGKLKN) is disordered. ANK repeat units lie at residues 79 to 110 (DAYFPVHECVFKGDIRRLSSLIRSHSIGQKDN), 111 to 140 (HGNTPLHLAVMLGNKECAHLLLAHNAPVKV), and 144 to 173 (QGWSPLAEAISYGDRQMITALLRKLKQQSR).

It localises to the endoplasmic reticulum membrane. In terms of biological role, acts as a molecular chaperone for G protein-coupled receptors, regulating their biogenesis and exit from the ER. The chain is Ankyrin repeat domain-containing protein 13C (ankrd13c) from Xenopus tropicalis (Western clawed frog).